The sequence spans 657 residues: 1-deoxy-D-xylulose-5-phosphate synthase (657 aa).

Thiamine diphosphate contacts are provided by residues His-73 and 113–115 (SHA). A Mg(2+)-binding site is contributed by Asp-145. Thiamine diphosphate contacts are provided by residues 146 to 147 (GA), Asn-175, Tyr-293, and Glu-375. Residue Asn-175 coordinates Mg(2+).

The protein belongs to the transketolase family. DXPS subfamily. As to quaternary structure, homodimer. Mg(2+) is required as a cofactor. The cofactor is thiamine diphosphate.

It catalyses the reaction D-glyceraldehyde 3-phosphate + pyruvate + H(+) = 1-deoxy-D-xylulose 5-phosphate + CO2. The protein operates within metabolic intermediate biosynthesis; 1-deoxy-D-xylulose 5-phosphate biosynthesis; 1-deoxy-D-xylulose 5-phosphate from D-glyceraldehyde 3-phosphate and pyruvate: step 1/1. Catalyzes the acyloin condensation reaction between C atoms 2 and 3 of pyruvate and glyceraldehyde 3-phosphate to yield 1-deoxy-D-xylulose-5-phosphate (DXP). This chain is 1-deoxy-D-xylulose-5-phosphate synthase, found in Pseudarthrobacter chlorophenolicus (strain ATCC 700700 / DSM 12829 / CIP 107037 / JCM 12360 / KCTC 9906 / NCIMB 13794 / A6) (Arthrobacter chlorophenolicus).